A 184-amino-acid polypeptide reads, in one-letter code: GTP cyclohydrolase 1 (184 aa).

Positions 75, 78, and 146 each coordinate Zn(2+).

It belongs to the GTP cyclohydrolase I family. In terms of assembly, toroid-shaped homodecamer, composed of two pentamers of five dimers.

It catalyses the reaction GTP + H2O = 7,8-dihydroneopterin 3'-triphosphate + formate + H(+). It functions in the pathway cofactor biosynthesis; 7,8-dihydroneopterin triphosphate biosynthesis; 7,8-dihydroneopterin triphosphate from GTP: step 1/1. The polypeptide is GTP cyclohydrolase 1 (Chromohalobacter salexigens (strain ATCC BAA-138 / DSM 3043 / CIP 106854 / NCIMB 13768 / 1H11)).